A 316-amino-acid chain; its full sequence is MASLKSLFLLFLFFFTAQSRLTTNFYSKTCPRFLDIIRDTITNKQITNPTTAAAVIRLFFHDCFPNGCDASVLISSTAFNTAERDSSINLSLPGDGFDVIVRAKTALELACPNTVSCSDIISVATRDLLITVGGPYYDVFLGRRDSRTSKSSLLTDLLPLPSTPISKIIQQFESKGFTVQEMVALSGAHSIGFSHCKEFVGRVGRNNTGYNPRFAVALKKACANYPKDPTISVFNDIMTPNKFDNMYYQNLKKGLGLLESDHGLYSDPRTRYFVDLYAKNQDLFFKDFAKAMQKLSLFGIQTGRRGEIRRRCDAIN.

The first 19 residues, 1-19 (MASLKSLFLLFLFFFTAQS), serve as a signal peptide directing secretion. Cystine bridges form between Cys30/Cys111, Cys63/Cys68, Cys117/Cys312, and Cys196/Cys222. His61 functions as the Proton acceptor in the catalytic mechanism. 4 residues coordinate Ca(2+): Asp62, Gly67, Asp69, and Ser71. Pro159 lines the substrate pocket. Heme b is bound at residue His189. Ser190 contributes to the Ca(2+) binding site. An N-linked (GlcNAc...) asparagine glycan is attached at Asn206. Ca(2+)-binding residues include Asp236, Thr239, and Asp244.

It belongs to the peroxidase family. Classical plant (class III) peroxidase subfamily. Heme b serves as cofactor. The cofactor is Ca(2+).

It is found in the secreted. The catalysed reaction is 2 a phenolic donor + H2O2 = 2 a phenolic radical donor + 2 H2O. Removal of H(2)O(2), oxidation of toxic reductants, biosynthesis and degradation of lignin, suberization, auxin catabolism, response to environmental stresses such as wounding, pathogen attack and oxidative stress. These functions might be dependent on each isozyme/isoform in each plant tissue. This Arabidopsis thaliana (Mouse-ear cress) protein is Peroxidase 31 (PER31).